The sequence spans 274 residues: Ubiquinone biosynthesis O-methyltransferase, mitochondrial (274 aa).

Residues 1–30 constitute a mitochondrion transit peptide; it reads MNSMNILNKVKNVKSYTRLVRQGFLSQQRN. S-adenosyl-L-methionine-binding residues include Arg-65, Gly-88, Asp-109, and Met-154. Mg(2+) contacts are provided by Glu-155, Glu-158, and His-159.

This sequence belongs to the class I-like SAM-binding methyltransferase superfamily. UbiG/COQ3 family. Component of a multi-subunit COQ enzyme complex, composed of at least coq3, coq4, coq5, coq6, coq7 and coq9. Mg(2+) serves as cofactor.

Its subcellular location is the mitochondrion inner membrane. The catalysed reaction is 3,4-dihydroxy-5-(all-trans-decaprenyl)benzoate + S-adenosyl-L-methionine = 4-hydroxy-3-methoxy-5-(all-trans-decaprenyl)benzoate + S-adenosyl-L-homocysteine + H(+). It carries out the reaction a 3-demethylubiquinone + S-adenosyl-L-methionine = a ubiquinone + S-adenosyl-L-homocysteine. It catalyses the reaction 3-demethylubiquinol-10 + S-adenosyl-L-methionine = ubiquinol-10 + S-adenosyl-L-homocysteine + H(+). It participates in cofactor biosynthesis; ubiquinone biosynthesis. Its function is as follows. O-methyltransferase required for two non-consecutive steps during ubiquinone biosynthesis. Catalyzes the 2 O-methylation of 3,4-dihydroxy-5-(all-trans-decaprenyl)benzoic acid into 4-hydroxy-3-methoxy-5-(all-trans-decaprenyl)benzoic acid. Also catalyzes the last step of ubiquinone biosynthesis by mediating methylation of 3-demethylubiquinone into ubiquinone. Also able to mediate the methylation of 3-demethylubiquinol-10 into ubiquinol-10. This is Ubiquinone biosynthesis O-methyltransferase, mitochondrial from Schizosaccharomyces pombe (strain 972 / ATCC 24843) (Fission yeast).